The sequence spans 627 residues: uncharacterized protein (627 aa).

Disordered stretches follow at residues 57-82 (EDAM…QGED), 96-121 (PEAQ…APPG), 160-184 (GCSH…DAAY), 198-232 (AQSQ…CPSG), 247-277 (SHDA…RGAP), 335-358 (RQAG…EAAY), and 449-579 (VFDV…PPLS). Residues 169–183 (SSSDQAADAPAGDAA) are compositionally biased toward low complexity. Low complexity predominate over residues 336–357 (QAGAEPAQAPATAPAPEGTEAA). Over residues 450–464 (FDVKEQGAHADRDAA) the composition is skewed to basic and acidic residues.

This is an uncharacterized protein from Treponema pallidum (strain Nichols).